The primary structure comprises 274 residues: Diaminopimelate epimerase (274 aa).

Substrate contacts are provided by N11, Q44, and N64. Catalysis depends on C73, which acts as the Proton donor. Substrate-binding positions include 74–75, N157, N190, and 208–209; these read GN and ER. The Proton acceptor role is filled by C217. 218–219 contacts substrate; the sequence is GS.

Belongs to the diaminopimelate epimerase family. In terms of assembly, homodimer.

The protein localises to the cytoplasm. The enzyme catalyses (2S,6S)-2,6-diaminopimelate = meso-2,6-diaminopimelate. It functions in the pathway amino-acid biosynthesis; L-lysine biosynthesis via DAP pathway; DL-2,6-diaminopimelate from LL-2,6-diaminopimelate: step 1/1. Functionally, catalyzes the stereoinversion of LL-2,6-diaminopimelate (L,L-DAP) to meso-diaminopimelate (meso-DAP), a precursor of L-lysine and an essential component of the bacterial peptidoglycan. In Histophilus somni (strain 2336) (Haemophilus somnus), this protein is Diaminopimelate epimerase.